The chain runs to 554 residues: Eukaryotic translation initiation factor 3 subunit D-2 (554 aa).

The interval 116 to 149 (RGNAAIGGGQGGAGGTGGAGVGNKYGKGRDMRRG) is disordered. A compositionally biased stretch (gly residues) spans 120 to 140 (AIGGGQGGAGGTGGAGVGNKY). The tract at residues 291-305 (QFDLLTVNETALEPP) is RNA gate. Residues 532–554 (FDSDGNDDEETSDDRPFLKSLGN) form a disordered region.

It belongs to the eIF-3 subunit D family. In terms of assembly, component of the eukaryotic translation initiation factor 3 (eIF-3) complex. The eIF-3 complex interacts with pix.

The protein resides in the cytoplasm. In terms of biological role, mRNA cap-binding component of the eukaryotic translation initiation factor 3 (eIF-3) complex, which is involved in protein synthesis of a specialized repertoire of mRNAs and, together with other initiation factors, stimulates binding of mRNA and methionyl-tRNAi to the 40S ribosome. The eIF-3 complex specifically targets and initiates translation of a subset of mRNAs involved in cell proliferation. In the eIF-3 complex, eif3d specifically recognizes and binds the 7-methylguanosine cap of a subset of mRNAs. The sequence is that of Eukaryotic translation initiation factor 3 subunit D-2 from Drosophila virilis (Fruit fly).